The following is a 392-amino-acid chain: MLLILLSVALLALSSAQNLNEDVSQEESPSLIAGNPQGPSPQGGNKPQGPPPPPGKPQGPPPQGGNKPQGPPPPGKPQGPPPQGDKSRSPRSPPGKPQGPPPQGGNQPQGPPPPPGKPQGPPPQGGNKPQGPPPPGKPQGPPPQGDKSQSPRSPPGKPQGPPPQGGNQPQGPPPPPGKPQGPPPQGGNKPQGPPPPGKPQGPPPQGDKSQSPRSPPGKPQGPPPQGGNQPQGPPPPPGKPQGPPQQGGNRPQGPPPPGKPQGPPPQGDKSRSPQSPPGKPQGPPPQGGNQPQGPPPPPGKPQGPPPQGGNKPQGPPPPGKPQGPPAQGGSKSQSARSPPGKPQGPPQQEGNNPQGPPPPAGGNPQQPQAPPAGQPQGPPRPPQGGRPSRPPQ.

Positions 1–16 (MLLILLSVALLALSSA) are cleaved as a signal peptide. Pyrrolidone carboxylic acid is present on Gln-17. Positions 19-28 (LNEDVSQEES) are enriched in polar residues. The disordered stretch occupies residues 19 to 392 (LNEDVSQEES…QGGRPSRPPQ (374 aa)). The span at 34–47 (GNPQGPSPQGGNKP) shows a compositional bias: low complexity. Ser-40 carries the phosphoserine; alternate modification. O-linked (Hex) serine; alternate glycosylation occurs at Ser-40. Residues 48–83 (QGPPPPPGKPQGPPPQGGNKPQGPPPPGKPQGPPPQ) show a composition bias toward pro residues. A run of 15 repeats spans residues 53 to 72 (PPGKPQGPPPQGGNKPQGPP), 73 to 92 (PPGKPQGPPPQGDKSRSPRS), 93 to 112 (PPGKPQGPPPQGGNQPQGPP), 114 to 133 (PPGKPQGPPPQGGNKPQGPP), 134 to 153 (PPGKPQGPPPQGDKSQSPRS), 154 to 173 (PPGKPQGPPPQGGNQPQGPP), 175 to 194 (PPGKPQGPPPQGGNKPQGPP), 195 to 214 (PPGKPQGPPPQGDKSQSPRS), 215 to 234 (PPGKPQGPPPQGGNQPQGPP), 236 to 255 (PPGKPQGPPQQGGNRPQGPP), 256 to 275 (PPGKPQGPPPQGDKSRSPQS), 276 to 295 (PPGKPQGPPPQGGNQPQGPP), 297 to 316 (PPGKPQGPPPQGGNKPQGPP), 317 to 336 (PPGKPQGPPAQGGSKSQSAR), and 338 to 357 (PPGKPQGPPQQEGNNPQGPP). A 15 X 20 AA approximate tandem repeats of P-P-G-K-P-Q-G-P-P-[PAQ]-Q-[GE]-[GD]-[NKS]-[KSQRN]-[PRQS]-[QS] [GPS]-[PQAR]-[PSR] region spans residues 53–357 (PPGKPQGPPP…QEGNNPQGPP (305 aa)). O-linked (HexNAc...) serine glycosylation is present at Ser-87. Residues 91 to 144 (RSPPGKPQGPPPQGGNQPQGPPPPPGKPQGPPPQGGNKPQGPPPPGKPQGPPPQ) show a composition bias toward pro residues. Position 92 is a phosphoserine (Ser-92). Residue Ser-150 is modified to Phosphoserine; alternate. Ser-150 carries an O-linked (Hex) serine; alternate glycan. Pro residues-rich tracts occupy residues 152-205 (RSPP…PPPQ), 213-243 (RSPPGKPQGPPPQGGNQPQGPPPPPGKPQGP), 252-266 (QGPPPPGKPQGPPPQ), and 274-324 (QSPP…PQGP). Low complexity predominate over residues 325 to 334 (PAQGGSKSQS). Ser-330 carries O-linked (HexNAc...) serine glycosylation. The span at 354–392 (QGPPPPAGGNPQQPQAPPAGQPQGPPRPPQGGRPSRPPQ) shows a compositional bias: pro residues.

O-glycosylated. O-glycosylation on Ser-87 is prevalent in head and neck cancer patients. O-Glycosylation on Ser-330 has a 5 times prevalence in head and neck cancers. In terms of processing, proteolytically cleaved at the tripeptide Xaa-Pro-Gln, where Xaa in the P(3) position is mostly lysine. The endoprotease may be of microbial origin. Post-translationally, pyroglutamate formation occurs on terminal Gln residues of cleaved peptides. Besides on the N-terminal of mature PBR1, pyroglutamate formation found on at least Gln-58.

The protein localises to the secreted. This is Basic salivary proline-rich protein 1 (PRB1) from Homo sapiens (Human).